Reading from the N-terminus, the 585-residue chain is tRNA-guanine(15) transglycosylase (585 aa).

Asp95 serves as the catalytic Nucleophile. Asp130 and Ala196 together coordinate substrate. 3 residues coordinate Zn(2+): Cys279, Cys281, and Cys284. The PUA domain occupies 507–582 (VMRVVVNKEA…RAVKTRRGVE (76 aa)).

This sequence belongs to the archaeosine tRNA-ribosyltransferase family. The cofactor is Zn(2+).

The enzyme catalyses guanosine(15) in tRNA + 7-cyano-7-deazaguanine = 7-cyano-7-carbaguanosine(15) in tRNA + guanine. It functions in the pathway tRNA modification; archaeosine-tRNA biosynthesis. Exchanges the guanine residue with 7-cyano-7-deazaguanine (preQ0) at position 15 in the dihydrouridine loop (D-loop) of archaeal tRNAs. This is tRNA-guanine(15) transglycosylase from Pyrococcus furiosus (strain ATCC 43587 / DSM 3638 / JCM 8422 / Vc1).